Here is a 361-residue protein sequence, read N- to C-terminus: Peptide chain release factor 1 (361 aa).

Position 237 is an N5-methylglutamine (glutamine 237).

Belongs to the prokaryotic/mitochondrial release factor family. In terms of processing, methylated by PrmC. Methylation increases the termination efficiency of RF1.

It is found in the cytoplasm. Its function is as follows. Peptide chain release factor 1 directs the termination of translation in response to the peptide chain termination codons UAG and UAA. This is Peptide chain release factor 1 from Thioalkalivibrio sulfidiphilus (strain HL-EbGR7).